The primary structure comprises 156 residues: Ribosomal RNA large subunit methyltransferase H (156 aa).

S-adenosyl-L-methionine contacts are provided by residues Leu73, Gly104, and 123–128; that span reads LSPLTL.

This sequence belongs to the RNA methyltransferase RlmH family. In terms of assembly, homodimer.

The protein localises to the cytoplasm. The enzyme catalyses pseudouridine(1915) in 23S rRNA + S-adenosyl-L-methionine = N(3)-methylpseudouridine(1915) in 23S rRNA + S-adenosyl-L-homocysteine + H(+). Its function is as follows. Specifically methylates the pseudouridine at position 1915 (m3Psi1915) in 23S rRNA. This is Ribosomal RNA large subunit methyltransferase H from Marinobacter nauticus (strain ATCC 700491 / DSM 11845 / VT8) (Marinobacter aquaeolei).